Reading from the N-terminus, the 655-residue chain is Mannosyl-oligosaccharide 1,2-alpha-mannosidase IA (655 aa).

Residues 1 to 43 (MPVGGLLPLFSSPGGGGLGSGLGGGLGGGRKGSGPAAFRLTEK) lie on the Cytoplasmic side of the membrane. The chain crosses the membrane as a helical; Signal-anchor for type II membrane protein span at residues 44–64 (FVLLLVFSAFITLCFGAIFFL). Residues 65-655 (PDSSKLLSGV…QKKEIDGKEK (591 aa)) lie on the Lumenal side of the membrane. Residues C478 and C510 are joined by a disulfide bond. An N-linked (GlcNAc...) asparagine glycan is attached at N515. The active-site Proton donor is the E524. T635 is a Ca(2+) binding site.

Belongs to the glycosyl hydrolase 47 family. The cofactor is Ca(2+). In terms of processing, N-linked glycan at Asn-515 consists of Man(6)-GlcNAc(2).

It localises to the golgi apparatus membrane. The catalysed reaction is N(4)-(alpha-D-Man-(1-&gt;2)-alpha-D-Man-(1-&gt;2)-alpha-D-Man-(1-&gt;3)-[alpha-D-Man-(1-&gt;2)-alpha-D-Man-(1-&gt;3)-[alpha-D-Man-(1-&gt;2)-alpha-D-Man-(1-&gt;6)]-alpha-D-Man-(1-&gt;6)]-beta-D-Man-(1-&gt;4)-beta-D-GlcNAc-(1-&gt;4)-beta-D-GlcNAc)-L-asparaginyl-[protein] (N-glucan mannose isomer 9A1,2,3B1,2,3) + 4 H2O = N(4)-(alpha-D-Man-(1-&gt;3)-[alpha-D-Man-(1-&gt;3)-[alpha-D-Man-(1-&gt;6)]-alpha-D-Man-(1-&gt;6)]-beta-D-Man-(1-&gt;4)-beta-D-GlcNAc-(1-&gt;4)-beta-D-GlcNAc)-L-asparaginyl-[protein] (N-glucan mannose isomer 5A1,2) + 4 beta-D-mannose. It catalyses the reaction N(4)-(alpha-D-Man-(1-&gt;2)-alpha-D-Man-(1-&gt;2)-alpha-D-Man-(1-&gt;3)-[alpha-D-Man-(1-&gt;3)-[alpha-D-Man-(1-&gt;2)-alpha-D-Man-(1-&gt;6)]-alpha-D-Man-(1-&gt;6)]-beta-D-Man-(1-&gt;4)-beta-D-GlcNAc-(1-&gt;4)-beta-D-GlcNAc)-L-asparaginyl-[protein] (N-glucan mannose isomer 8A1,2,3B1,3) + 3 H2O = N(4)-(alpha-D-Man-(1-&gt;3)-[alpha-D-Man-(1-&gt;3)-[alpha-D-Man-(1-&gt;6)]-alpha-D-Man-(1-&gt;6)]-beta-D-Man-(1-&gt;4)-beta-D-GlcNAc-(1-&gt;4)-beta-D-GlcNAc)-L-asparaginyl-[protein] (N-glucan mannose isomer 5A1,2) + 3 beta-D-mannose. The protein operates within protein modification; protein glycosylation. With respect to regulation, inhibited by both 1-deoxymannojirimycin and kifunensine. In terms of biological role, involved in the maturation of Asn-linked oligosaccharides. Progressively trim alpha-1,2-linked mannose residues from Man(9)GlcNAc(2) to produce Man(5)GlcNAc(2). The polypeptide is Mannosyl-oligosaccharide 1,2-alpha-mannosidase IA (Man1a1) (Mus musculus (Mouse)).